A 206-amino-acid polypeptide reads, in one-letter code: Thymidylate kinase (206 aa).

An ATP-binding site is contributed by 11-18 (GIDGAGKT).

It belongs to the thymidylate kinase family.

It catalyses the reaction dTMP + ATP = dTDP + ADP. Functionally, phosphorylation of dTMP to form dTDP in both de novo and salvage pathways of dTTP synthesis. The polypeptide is Thymidylate kinase (Burkholderia ambifaria (strain MC40-6)).